Here is a 244-residue protein sequence, read N- to C-terminus: tRNA (guanine-N(7)-)-methyltransferase (244 aa).

Residues E74, E99, D126, and D149 each contribute to the S-adenosyl-L-methionine site. Residue D149 is part of the active site. Substrate-binding positions include K153, D185, and 222-225; that span reads TKFE.

This sequence belongs to the class I-like SAM-binding methyltransferase superfamily. TrmB family.

The enzyme catalyses guanosine(46) in tRNA + S-adenosyl-L-methionine = N(7)-methylguanosine(46) in tRNA + S-adenosyl-L-homocysteine. It participates in tRNA modification; N(7)-methylguanine-tRNA biosynthesis. Catalyzes the formation of N(7)-methylguanine at position 46 (m7G46) in tRNA. In Colwellia psychrerythraea (strain 34H / ATCC BAA-681) (Vibrio psychroerythus), this protein is tRNA (guanine-N(7)-)-methyltransferase.